Reading from the N-terminus, the 235-residue chain is RING-H2 finger protein ATL17 (235 aa).

Residues 1–21 (MLTTTILILLIVILMVSLHLY) form a helical membrane-spanning segment. The RING-type; atypical zinc finger occupies 76 to 118 (CSVCLSEFKDNESGRVMPNCKHTFHVHCIDMWFHSHSSCPLCR). Residues 143-167 (VYGDTNHHEGTETTGDSVPEDSQRK) are disordered.

This sequence belongs to the RING-type zinc finger family. ATL subfamily.

Its subcellular location is the membrane. The enzyme catalyses S-ubiquitinyl-[E2 ubiquitin-conjugating enzyme]-L-cysteine + [acceptor protein]-L-lysine = [E2 ubiquitin-conjugating enzyme]-L-cysteine + N(6)-ubiquitinyl-[acceptor protein]-L-lysine.. Its pathway is protein modification; protein ubiquitination. May be involved in the early steps of the plant defense signaling pathway. The chain is RING-H2 finger protein ATL17 (ATL17) from Arabidopsis thaliana (Mouse-ear cress).